The following is a 511-amino-acid chain: Endoglucanase B (511 aa).

Positions 1 to 29 (MNLLSGWVRPLMLGCGLLGAALSAGSIQA) are cleaved as a signal peptide. The 101-residue stretch at 30–130 (AVCEYRVTNE…AVTGAICGGQ (101 aa)) folds into the CBM2 domain. Cysteines 32 and 127 form a disulfide. The interval 137 to 173 (SVASSSSSSSVVSSTPRSSSSSVSSSVPGTSSSSSSS) is disordered. The 30-residue stretch at 180 to 209 (ACNWYGTLTPLCNNTSNGWGYEDGRSCVAR) folds into the CBM10 domain. Intrachain disulfides connect Cys-181-Cys-212 and Cys-191-Cys-206. The active-site Nucleophile is the Asp-276. The active-site Proton donor is the Asp-393.

It belongs to the glycosyl hydrolase 45 (cellulase K) family.

The protein resides in the periplasm. The catalysed reaction is Endohydrolysis of (1-&gt;4)-beta-D-glucosidic linkages in cellulose, lichenin and cereal beta-D-glucans.. Functionally, this enzyme catalyzes the endohydrolysis of 1,4-beta-glucosidic linkages in cellulose, lichenin and cereal beta-D-glucans. EGB is most active against barley beta-glucan, but showed significant activity against amorphous and crystalline cellulose. This chain is Endoglucanase B (celB), found in Cellvibrio japonicus (strain Ueda107) (Pseudomonas fluorescens subsp. cellulosa).